A 72-amino-acid chain; its full sequence is Large ribosomal subunit protein bL32 (72 aa).

This sequence belongs to the bacterial ribosomal protein bL32 family.

In Dehalococcoides mccartyi (strain ATCC BAA-2266 / KCTC 15142 / 195) (Dehalococcoides ethenogenes (strain 195)), this protein is Large ribosomal subunit protein bL32.